We begin with the raw amino-acid sequence, 259 residues long: Phosphatidylserine decarboxylase proenzyme (259 aa).

Ser183 acts as the Schiff-base intermediate with substrate; via pyruvic acid in catalysis. A Pyruvic acid (Ser); by autocatalysis modification is found at Ser183.

The protein belongs to the phosphatidylserine decarboxylase family. PSD-A subfamily. In terms of assembly, heterodimer of a large membrane-associated beta subunit and a small pyruvoyl-containing alpha subunit. Requires pyruvate as cofactor. Post-translationally, is synthesized initially as an inactive proenzyme. Formation of the active enzyme involves a self-maturation process in which the active site pyruvoyl group is generated from an internal serine residue via an autocatalytic post-translational modification. Two non-identical subunits are generated from the proenzyme in this reaction, and the pyruvate is formed at the N-terminus of the alpha chain, which is derived from the carboxyl end of the proenzyme. The post-translation cleavage follows an unusual pathway, termed non-hydrolytic serinolysis, in which the side chain hydroxyl group of the serine supplies its oxygen atom to form the C-terminus of the beta chain, while the remainder of the serine residue undergoes an oxidative deamination to produce ammonia and the pyruvoyl prosthetic group on the alpha chain.

The protein localises to the cell membrane. It carries out the reaction a 1,2-diacyl-sn-glycero-3-phospho-L-serine + H(+) = a 1,2-diacyl-sn-glycero-3-phosphoethanolamine + CO2. Its pathway is phospholipid metabolism; phosphatidylethanolamine biosynthesis; phosphatidylethanolamine from CDP-diacylglycerol: step 2/2. In terms of biological role, catalyzes the formation of phosphatidylethanolamine (PtdEtn) from phosphatidylserine (PtdSer). The polypeptide is Phosphatidylserine decarboxylase proenzyme (Neisseria gonorrhoeae (strain ATCC 700825 / FA 1090)).